Reading from the N-terminus, the 251-residue chain is Ubiquinone/menaquinone biosynthesis C-methyltransferase UbiE (251 aa).

S-adenosyl-L-methionine is bound by residues Thr-74, Asp-95, Asn-123–Ala-124, and Ser-140.

Belongs to the class I-like SAM-binding methyltransferase superfamily. MenG/UbiE family.

The catalysed reaction is a 2-demethylmenaquinol + S-adenosyl-L-methionine = a menaquinol + S-adenosyl-L-homocysteine + H(+). The enzyme catalyses a 2-methoxy-6-(all-trans-polyprenyl)benzene-1,4-diol + S-adenosyl-L-methionine = a 5-methoxy-2-methyl-3-(all-trans-polyprenyl)benzene-1,4-diol + S-adenosyl-L-homocysteine + H(+). It functions in the pathway quinol/quinone metabolism; menaquinone biosynthesis; menaquinol from 1,4-dihydroxy-2-naphthoate: step 2/2. The protein operates within cofactor biosynthesis; ubiquinone biosynthesis. Methyltransferase required for the conversion of demethylmenaquinol (DMKH2) to menaquinol (MKH2) and the conversion of 2-polyprenyl-6-methoxy-1,4-benzoquinol (DDMQH2) to 2-polyprenyl-3-methyl-6-methoxy-1,4-benzoquinol (DMQH2). The polypeptide is Ubiquinone/menaquinone biosynthesis C-methyltransferase UbiE (Klebsiella pneumoniae subsp. pneumoniae (strain ATCC 700721 / MGH 78578)).